Here is a 97-residue protein sequence, read N- to C-terminus: Co-chaperonin GroES (97 aa).

Belongs to the GroES chaperonin family. As to quaternary structure, heptamer of 7 subunits arranged in a ring. Interacts with the chaperonin GroEL.

It localises to the cytoplasm. Functionally, together with the chaperonin GroEL, plays an essential role in assisting protein folding. The GroEL-GroES system forms a nano-cage that allows encapsulation of the non-native substrate proteins and provides a physical environment optimized to promote and accelerate protein folding. GroES binds to the apical surface of the GroEL ring, thereby capping the opening of the GroEL channel. The protein is Co-chaperonin GroES of Klebsiella pneumoniae subsp. pneumoniae (strain ATCC 700721 / MGH 78578).